A 514-amino-acid chain; its full sequence is ATP synthase subunit alpha (514 aa).

An ATP-binding site is contributed by 170 to 177 (GDRQTGKT).

This sequence belongs to the ATPase alpha/beta chains family. In terms of assembly, F-type ATPases have 2 components, CF(1) - the catalytic core - and CF(0) - the membrane proton channel. CF(1) has five subunits: alpha(3), beta(3), gamma(1), delta(1), epsilon(1). CF(0) has three main subunits: a(1), b(2) and c(9-12). The alpha and beta chains form an alternating ring which encloses part of the gamma chain. CF(1) is attached to CF(0) by a central stalk formed by the gamma and epsilon chains, while a peripheral stalk is formed by the delta and b chains.

Its subcellular location is the cell inner membrane. It carries out the reaction ATP + H2O + 4 H(+)(in) = ADP + phosphate + 5 H(+)(out). Its function is as follows. Produces ATP from ADP in the presence of a proton gradient across the membrane. The alpha chain is a regulatory subunit. In Psychrobacter arcticus (strain DSM 17307 / VKM B-2377 / 273-4), this protein is ATP synthase subunit alpha.